The sequence spans 254 residues: MKDIIIASFYKFIPLNDFESLREPILTKMHEIGIKGTIILAHEGVNGGFAGNREQMNVFYDYLRSDSRFADLHFKETYDSKNPFDKAKVKLRKEIVTMGVQKVDPSYNAGTYLSPEEWHQFIQDPNVILLDTRNDYEYELGTFKNAINPDIENFREFPDYVQRNLIDKKDKKIAMFCTGGIRCEKTTAYMKELGFQHVYQLHDGILNYLESIPESESLWEGKCFVFDDRVAVDQKLDRVYPQLPQDYKYEREQK.

The 95-residue stretch at 123-217 (QDPNVILLDT…YLESIPESES (95 aa)) folds into the Rhodanese domain. The active-site Cysteine persulfide intermediate is C177.

It belongs to the TrhO family.

The catalysed reaction is uridine(34) in tRNA + AH2 + O2 = 5-hydroxyuridine(34) in tRNA + A + H2O. Catalyzes oxygen-dependent 5-hydroxyuridine (ho5U) modification at position 34 in tRNAs. The chain is tRNA uridine(34) hydroxylase from Legionella pneumophila (strain Corby).